A 160-amino-acid chain; its full sequence is Nucleotide-binding protein Tola_0795 (160 aa).

Belongs to the YajQ family.

In terms of biological role, nucleotide-binding protein. This chain is Nucleotide-binding protein Tola_0795, found in Tolumonas auensis (strain DSM 9187 / NBRC 110442 / TA 4).